Reading from the N-terminus, the 549-residue chain is Glucose-6-phosphate isomerase (549 aa).

The active-site Proton donor is Glu-355. Catalysis depends on residues His-386 and Lys-514.

Belongs to the GPI family.

It localises to the cytoplasm. It catalyses the reaction alpha-D-glucose 6-phosphate = beta-D-fructose 6-phosphate. The protein operates within carbohydrate biosynthesis; gluconeogenesis. It participates in carbohydrate degradation; glycolysis; D-glyceraldehyde 3-phosphate and glycerone phosphate from D-glucose: step 2/4. Catalyzes the reversible isomerization of glucose-6-phosphate to fructose-6-phosphate. The sequence is that of Glucose-6-phosphate isomerase from Salmonella paratyphi B (strain ATCC BAA-1250 / SPB7).